The sequence spans 105 residues: Thioredoxin (105 aa).

One can recognise a Thioredoxin domain in the interval 1–105 (MVNNVTDISF…SLLDWINKSI (105 aa)). Cys30 and Cys33 are oxidised to a cystine.

The protein belongs to the thioredoxin family.

In terms of biological role, component of the thioredoxin-thioredoxin reductase system. Participates in various redox reactions through the reversible oxidation of its active center dithiol to a disulfide and catalyzes dithiol-disulfide exchange reactions. The chain is Thioredoxin (trxA) from Rickettsia typhi (strain ATCC VR-144 / Wilmington).